A 482-amino-acid chain; its full sequence is tRNA sulfurtransferase (482 aa).

Residues 61 to 165 (LAIRDALTRI…DDRLLLIKGR (105 aa)) form the THUMP domain. Residues 183 to 184 (LI), Lys-265, Gly-287, and Gln-296 contribute to the ATP site. Cys-344 and Cys-456 are disulfide-bonded. In terms of domain architecture, Rhodanese spans 404–482 (FGPNDVILDI…GFQNVKVYRP (79 aa)). Residue Cys-456 is the Cysteine persulfide intermediate of the active site.

The protein belongs to the ThiI family.

The protein localises to the cytoplasm. It carries out the reaction [ThiI sulfur-carrier protein]-S-sulfanyl-L-cysteine + a uridine in tRNA + 2 reduced [2Fe-2S]-[ferredoxin] + ATP + H(+) = [ThiI sulfur-carrier protein]-L-cysteine + a 4-thiouridine in tRNA + 2 oxidized [2Fe-2S]-[ferredoxin] + AMP + diphosphate. The enzyme catalyses [ThiS sulfur-carrier protein]-C-terminal Gly-Gly-AMP + S-sulfanyl-L-cysteinyl-[cysteine desulfurase] + AH2 = [ThiS sulfur-carrier protein]-C-terminal-Gly-aminoethanethioate + L-cysteinyl-[cysteine desulfurase] + A + AMP + 2 H(+). It functions in the pathway cofactor biosynthesis; thiamine diphosphate biosynthesis. In terms of biological role, catalyzes the ATP-dependent transfer of a sulfur to tRNA to produce 4-thiouridine in position 8 of tRNAs, which functions as a near-UV photosensor. Also catalyzes the transfer of sulfur to the sulfur carrier protein ThiS, forming ThiS-thiocarboxylate. This is a step in the synthesis of thiazole, in the thiamine biosynthesis pathway. The sulfur is donated as persulfide by IscS. The protein is tRNA sulfurtransferase of Citrobacter koseri (strain ATCC BAA-895 / CDC 4225-83 / SGSC4696).